Here is a 192-residue protein sequence, read N- to C-terminus: 7-methyl-GTP pyrophosphatase (192 aa).

Catalysis depends on Asp69, which acts as the Proton acceptor.

The protein belongs to the Maf family. YceF subfamily. A divalent metal cation serves as cofactor.

It is found in the cytoplasm. The catalysed reaction is N(7)-methyl-GTP + H2O = N(7)-methyl-GMP + diphosphate + H(+). In terms of biological role, nucleoside triphosphate pyrophosphatase that hydrolyzes 7-methyl-GTP (m(7)GTP). May have a dual role in cell division arrest and in preventing the incorporation of modified nucleotides into cellular nucleic acids. The polypeptide is 7-methyl-GTP pyrophosphatase (Pseudomonas syringae pv. syringae (strain B728a)).